We begin with the raw amino-acid sequence, 1042 residues long: Ribosome biogenesis protein NOC1 (1042 aa).

Disordered regions lie at residues 1–20, 28–79, 101–128, 148–214, 546–567, and 897–1020; these read MGLKRAARQQRDIGKPAFDE, GKID…AAKD, LVADVDSGNEGGGGPSQPKISSEQSLDQ, NRED…IPQD, LNGDKRDGGTPRKKSNPSGSLT, and GKMT…LKTL. 2 stretches are compositionally biased toward basic and acidic residues: residues 9-18 and 63-79; these read QQRDIGKPAF and HPTEAEEHRDSHAAAKD. A compositionally biased stretch (polar residues) spans 118 to 128; it reads PKISSEQSLDQ. Composition is skewed to acidic residues over residues 153–164 and 173–194; these read NTEDEASPDEDA and SDSDEGGGQEEMEKEDVDSFSD. A compositionally biased stretch (basic and acidic residues) spans 195-207; it reads NEEKVTEKVDSGE. Positions 902-911 are enriched in basic and acidic residues; it reads KRDETKREFG. Residues 937-957 show a composition bias toward acidic residues; it reads NVDDDSDADLGDFDYSDDEED. Over residues 962-972 the composition is skewed to low complexity; sequence DGSMSDIGMDS. The segment covering 978–994 has biased composition (acidic residues); that stretch reads IFDDAGESDEQSSGEDE.

The protein belongs to the CBF/MAK21 family. Interacts with NOC2. Forms a nucleolar complex with NOC2 that binds to 90S and 66S pre-ribosomes.

The protein resides in the nucleus. It localises to the nucleolus. Its function is as follows. Required for 60S ribosomal subunit synthesis. This is Ribosome biogenesis protein NOC1 (NOC1) from Chaetomium thermophilum (strain DSM 1495 / CBS 144.50 / IMI 039719) (Thermochaetoides thermophila).